The sequence spans 212 residues: Pyrrolidone-carboxylate peptidase (212 aa).

Residues glutamate 80, cysteine 143, and histidine 165 contribute to the active site.

The protein belongs to the peptidase C15 family. In terms of assembly, homotetramer.

The protein localises to the cytoplasm. It catalyses the reaction Release of an N-terminal pyroglutamyl group from a polypeptide, the second amino acid generally not being Pro.. Functionally, removes 5-oxoproline from various penultimate amino acid residues except L-proline. The chain is Pyrrolidone-carboxylate peptidase from Vibrio vulnificus (strain YJ016).